The sequence spans 238 residues: Single-stranded DNA-binding protein WHY2, mitochondrial (238 aa).

The transit peptide at methionine 1–phenylalanine 29 directs the protein to the mitochondrion. The tract at residues lysine 62–leucine 67 is required for ssDNA binding.

Belongs to the Whirly family. Homotetramer.

The protein localises to the mitochondrion. Functionally, single-stranded DNA-binding protein that associates with mitochondrial DNA and may play a role in the regulation of the gene expression machinery. Also seems to be required to prevent break-induced DNA rearrangements in the mitochondrial genome. Can bind to melt double-stranded DNA in vivo. The chain is Single-stranded DNA-binding protein WHY2, mitochondrial (WHY2) from Arabidopsis thaliana (Mouse-ear cress).